The chain runs to 396 residues: Ribosomal RNA large subunit methyltransferase I (396 aa).

Positions 2-79 (SVFIYLVKGR…KEETVDLDFF (78 aa)) constitute a PUA domain.

It belongs to the methyltransferase superfamily. RlmI family.

Its subcellular location is the cytoplasm. It carries out the reaction cytidine(1962) in 23S rRNA + S-adenosyl-L-methionine = 5-methylcytidine(1962) in 23S rRNA + S-adenosyl-L-homocysteine + H(+). Specifically methylates the cytosine at position 1962 (m5C1962) of 23S rRNA. The protein is Ribosomal RNA large subunit methyltransferase I of Aeromonas salmonicida (strain A449).